The sequence spans 234 residues: Probable septum site-determining protein MinC (234 aa).

Belongs to the MinC family. In terms of assembly, interacts with MinD and FtsZ.

Cell division inhibitor that blocks the formation of polar Z ring septums. Rapidly oscillates between the poles of the cell to destabilize FtsZ filaments that have formed before they mature into polar Z rings. Prevents FtsZ polymerization. This is Probable septum site-determining protein MinC from Buchnera aphidicola subsp. Baizongia pistaciae (strain Bp).